The following is a 371-amino-acid chain: Putative glutamate--cysteine ligase 2 (371 aa).

The protein belongs to the glutamate--cysteine ligase type 2 family. YbdK subfamily.

The catalysed reaction is L-cysteine + L-glutamate + ATP = gamma-L-glutamyl-L-cysteine + ADP + phosphate + H(+). Its function is as follows. ATP-dependent carboxylate-amine ligase which exhibits weak glutamate--cysteine ligase activity. The chain is Putative glutamate--cysteine ligase 2 from Nitrosospira multiformis (strain ATCC 25196 / NCIMB 11849 / C 71).